Here is an 88-residue protein sequence, read N- to C-terminus: Small ribosomal subunit protein bS20 (88 aa).

The protein belongs to the bacterial ribosomal protein bS20 family.

In terms of biological role, binds directly to 16S ribosomal RNA. This is Small ribosomal subunit protein bS20 from Mycoplasmopsis synoviae (strain 53) (Mycoplasma synoviae).